We begin with the raw amino-acid sequence, 424 residues long: Lactate racemase (424 aa).

Ni(II)-pyridinium-3,5-bisthiocarboxylate mononucleotide is bound at residue 72-75 (DHTR). Residues His-108 and His-174 each act as proton donor/acceptor in the active site. The Ni(II)-pyridinium-3,5-bisthiocarboxylate mononucleotide site is built by Lys-184 and His-200. 2 residues coordinate substrate: Gln-295 and Lys-298.

This sequence belongs to the lactate racemase family. In terms of assembly, homodimer. Requires Ni(II)-pyridinium-3,5-bisthiocarboxylate mononucleotide as cofactor.

The catalysed reaction is (S)-lactate = (R)-lactate. With respect to regulation, activation of the apo-enzyme requires the three accessory proteins LarB, LarE and LarC, that are involved in the biosynthesis of the nickel-pincer cofactor of LarA. Inhibited by sulfite that behaves as a mixed inhibitor. Its function is as follows. Catalyzes the interconversion between the D- and L-isomers of lactate. May act as a rescue enzyme to ensure D-lactate production in physiological conditions where its production by the D-lactate dehydrogenase LdhD is not sufficient. D-Lactate is absolutely required for growth of L.plantarum and is an essential component of the cell wall peptidoglycan in this species, where it is incorporated as the last residue of the muramoyl-pentadepsipeptide peptidoglycan precursor; its incorporation confers high level of vancomycin resistance. This chain is Lactate racemase, found in Lactiplantibacillus plantarum (strain ATCC BAA-793 / NCIMB 8826 / WCFS1) (Lactobacillus plantarum).